The following is a 134-amino-acid chain: UPF0216 protein AF_0460 (134 aa).

It belongs to the UPF0216 family.

In Archaeoglobus fulgidus (strain ATCC 49558 / DSM 4304 / JCM 9628 / NBRC 100126 / VC-16), this protein is UPF0216 protein AF_0460.